The sequence spans 469 residues: MDLQLTTNSTDSGDRGGSSNESLQRQPPSQYSPAEVAGLAAVVSFLIVFTIVGNVLVVIAVLTSRALKAPQNLFQVSLASADILVATLVMPFSLANELMNYWYFGKVWCVIYLALDVLFCTSSIVHLCAISLDRYWSVTQAVEYNLKRTPRRIKGIIVTVWLISAVISFPPLISLYRDPEDDLYPQCELNDETWYILSSCIGSFFAPCIIMVLVYVRIYRVAKLRTRTLSEKRTVPEGSSQTENGLSRPPVGAGPSTAAAAAASLRLQAGENGHYHLHHHHHHLHHHHHHHHHQLRKSAELEDIELEESSTSENRRRRRSREEAAARKGSRGFSFSFSSTKGGQSAGAGSRLSRASNRSLEFFSTHRRRKRSSLCRRKVTQAREKRFTFVLAVVMGVFVVCWFPFFFTYSLYGICREACQVPETLFKFFFWIGYCNSSLNPVIYTIFNQDFRRSFKHILFKKKKKTSLQ.

The tract at residues 1 to 29 (MDLQLTTNSTDSGDRGGSSNESLQRQPPS) is disordered. Residues 1-36 (MDLQLTTNSTDSGDRGGSSNESLQRQPPSQYSPAEV) are Extracellular-facing. Residues N8 and N20 are each glycosylated (N-linked (GlcNAc...) asparagine). Residues 37-62 (AGLAAVVSFLIVFTIVGNVLVVIAVL) traverse the membrane as a helical segment. At 63-73 (TSRALKAPQNL) the chain is on the cytoplasmic side. A helical transmembrane segment spans residues 74–99 (FQVSLASADILVATLVMPFSLANELM). Topologically, residues 100 to 109 (NYWYFGKVWC) are extracellular. Cysteines 109 and 187 form a disulfide. The chain crosses the membrane as a helical span at residues 110 to 132 (VIYLALDVLFCTSSIVHLCAISL). At 133–154 (DRYWSVTQAVEYNLKRTPRRIK) the chain is on the cytoplasmic side. A helical membrane pass occupies residues 155–175 (GIIVTVWLISAVISFPPLISL). Residues 176–194 (YRDPEDDLYPQCELNDETW) are Extracellular-facing. Residues 195-216 (YILSSCIGSFFAPCIIMVLVYV) traverse the membrane as a helical segment. Residues 217–386 (RIYRVAKLRT…RKVTQAREKR (170 aa)) are Cytoplasmic-facing. Disordered stretches follow at residues 232 to 261 (KRTV…AAAA) and 279 to 353 (HHHH…SRLS). A compositionally biased stretch (basic residues) spans 279-296 (HHHHHLHHHHHHHHHQLR). Acidic residues predominate over residues 301–310 (LEDIELEESS). Residues 331-353 (RGFSFSFSSTKGGQSAGAGSRLS) show a composition bias toward low complexity. The chain crosses the membrane as a helical span at residues 387–407 (FTFVLAVVMGVFVVCWFPFFF). At 408–427 (TYSLYGICREACQVPETLFK) the chain is on the extracellular side. Residues 428-448 (FFFWIGYCNSSLNPVIYTIFN) traverse the membrane as a helical segment. The Cytoplasmic portion of the chain corresponds to 449-469 (QDFRRSFKHILFKKKKKTSLQ).

It belongs to the G-protein coupled receptor 1 family. Adrenergic receptor subfamily. ADRA2C sub-subfamily.

Its subcellular location is the cell membrane. In terms of biological role, alpha-2 adrenergic receptors mediate the catecholamine-induced inhibition of adenylate cyclase through the action of G proteins. The protein is Alpha-2C adrenergic receptor (ADRA2C) of Didelphis virginiana (North American opossum).